A 179-amino-acid chain; its full sequence is Large ribosomal subunit protein uL5 (179 aa).

Belongs to the universal ribosomal protein uL5 family. As to quaternary structure, part of the 50S ribosomal subunit; part of the 5S rRNA/L5/L18/L25 subcomplex. Contacts the 5S rRNA and the P site tRNA. Forms a bridge to the 30S subunit in the 70S ribosome.

This is one of the proteins that bind and probably mediate the attachment of the 5S RNA into the large ribosomal subunit, where it forms part of the central protuberance. In the 70S ribosome it contacts protein S13 of the 30S subunit (bridge B1b), connecting the 2 subunits; this bridge is implicated in subunit movement. Contacts the P site tRNA; the 5S rRNA and some of its associated proteins might help stabilize positioning of ribosome-bound tRNAs. The sequence is that of Large ribosomal subunit protein uL5 from Rickettsia prowazekii (strain Madrid E).